A 763-amino-acid polypeptide reads, in one-letter code: MIKDFFILDFSYEIKDNIPLIYIWSIDDEGNSCVVVERNFKPYFYVVYEGNGDEIIENIRKNCEVLLITKVKRKYLGNVVDALLVQTFTPTQIKRCREKISRINGIKSIFDADIRFTMRYSIDFDLRPFTWFKAEVSEVKLEGFRAKKVYILDKILSHYEGKIPELRAIGIDFQIYSKYGSLNPRKDPIVVLSLWSKEGSMQFSLDESMDDLKIIRKFVDYILNYDPDIIYVFDVDVFHWKYITERANSLGVKIDIGRKIGSEVSQGTYGHYSISGRLNVDLVGLLMNERLTGHIDLIEVANYLGISPKRDSLNWYEISRYWDDEKNRDLVKQYSLENAKSIYLLGNFLLSPYSELVKIIGLPLDKLSVASWGNRIEASLIRTAAKSEELIPIRMDNPNRSSKIKKTVIEPKIGIYSDVYVLDISSVYLSVIRKFNISPDTLVKGQCDDCYVSTISNYKFKKEPSGLYKTFLEELSNIQDTRKSKVIEELMSSFYDYIHWINSRWYSREIASAVDELSYEIGKLVIDLIKNSGFEVILANDFLVFVKGGSGDKLNELIFKINSLYDLNLKVRKIYRSLLILGNDRYAGLLEGDKIDIARIGKEDRDLCELVRNVKRKVVEEILISKDVKKAVKLVKSAVIKLRRGEFDIGELITWVHIEKDFSEYDKQLPFVVAARKAIQSGYLISKDSRIGYLIVKGHGSVHDRAEPFFFVKEKNRIDIEYYVDQLLRESLKVLTPLGVSEESLKKTNITDILDMFGASKKK.

Belongs to the DNA polymerase type-B family.

It catalyses the reaction DNA(n) + a 2'-deoxyribonucleoside 5'-triphosphate = DNA(n+1) + diphosphate. This is DNA polymerase 3 (dpo3) from Saccharolobus shibatae (strain ATCC 51178 / DSM 5389 / JCM 8931 / NBRC 15437 / B12) (Sulfolobus shibatae).